Here is a 993-residue protein sequence, read N- to C-terminus: Glycogen phosphorylase 2 (993 aa).

The segment at Met1–Gln82 is disordered. Residues Arg19 to Tyr48 are compositionally biased toward polar residues. Low complexity predominate over residues Glu58 to Glu77. Lys763 is subject to N6-(pyridoxal phosphate)lysine. Over residues Val962–Gly981 the composition is skewed to polar residues. The tract at residues Val962–Asn993 is disordered. The segment covering Asn983–Asn993 has biased composition (gly residues).

This sequence belongs to the glycogen phosphorylase family. In terms of assembly, homodimer. Pyridoxal 5'-phosphate serves as cofactor. The N-terminus is blocked. In terms of processing, enzyme activity requires processing of the 113 kDa peptide to an enzymatically active 106 kDa form of the protein. Processing would occur near the middle of the Gln-rich repetitive element.

The enzyme catalyses [(1-&gt;4)-alpha-D-glucosyl](n) + phosphate = [(1-&gt;4)-alpha-D-glucosyl](n-1) + alpha-D-glucose 1-phosphate. In terms of biological role, phosphorylase is an important allosteric enzyme in carbohydrate metabolism. Enzymes from different sources differ in their regulatory mechanisms and in their natural substrates. However, all known phosphorylases share catalytic and structural properties. The chain is Glycogen phosphorylase 2 (glpD) from Dictyostelium discoideum (Social amoeba).